We begin with the raw amino-acid sequence, 373 residues long: Dual-specificity RNA methyltransferase RlmN (373 aa).

Catalysis depends on glutamate 94, which acts as the Proton acceptor. In terms of domain architecture, Radical SAM core spans 100-339; that stretch reads EDDRATLCVS…VIVRKTRGDD (240 aa). Cysteines 107 and 344 form a disulfide. Cysteine 114, cysteine 118, and cysteine 121 together coordinate [4Fe-4S] cluster. Residues 168-169, serine 200, 222-224, and asparagine 301 contribute to the S-adenosyl-L-methionine site; these read GE and SIH. The active-site S-methylcysteine intermediate is the cysteine 344.

This sequence belongs to the radical SAM superfamily. RlmN family. Requires [4Fe-4S] cluster as cofactor.

The protein resides in the cytoplasm. It catalyses the reaction adenosine(2503) in 23S rRNA + 2 reduced [2Fe-2S]-[ferredoxin] + 2 S-adenosyl-L-methionine = 2-methyladenosine(2503) in 23S rRNA + 5'-deoxyadenosine + L-methionine + 2 oxidized [2Fe-2S]-[ferredoxin] + S-adenosyl-L-homocysteine. The enzyme catalyses adenosine(37) in tRNA + 2 reduced [2Fe-2S]-[ferredoxin] + 2 S-adenosyl-L-methionine = 2-methyladenosine(37) in tRNA + 5'-deoxyadenosine + L-methionine + 2 oxidized [2Fe-2S]-[ferredoxin] + S-adenosyl-L-homocysteine. Its function is as follows. Specifically methylates position 2 of adenine 2503 in 23S rRNA and position 2 of adenine 37 in tRNAs. m2A2503 modification seems to play a crucial role in the proofreading step occurring at the peptidyl transferase center and thus would serve to optimize ribosomal fidelity. This chain is Dual-specificity RNA methyltransferase RlmN, found in Shewanella sp. (strain ANA-3).